The chain runs to 756 residues: U3 small nucleolar RNA-associated protein 14 homolog B (756 aa).

Residues 21–44 (DLPENYPLSTSEDEGDSDGEGKRQ) are disordered. Ser29, Ser31, and Ser37 each carry phosphoserine. Coiled coils occupy residues 215-244 (SLEE…RREK) and 316-345 (PEAR…SEEE). Basic and acidic residues-rich tracts occupy residues 419–428 (KERSFQERVD) and 452–468 (LNKE…SSEE). Disordered stretches follow at residues 419 to 468 (KERS…SSEE) and 497 to 539 (QQGE…KKKK). Positions 449 to 476 (LQKLNKESHQSDNQKVSSEENVLHIQRE) form a coiled coil. At Ser554 the chain carries Phosphoserine.

It belongs to the UTP14 family. As to expression, expressed predominantly in germ cells of the testis; weakly expressed in brain.

It is found in the nucleus. Its subcellular location is the nucleolus. Its function is as follows. Essential for spermatogenesis. May be required specifically for ribosome biogenesis and hence protein synthesis during male meiosis. The polypeptide is U3 small nucleolar RNA-associated protein 14 homolog B (Utp14b) (Mus musculus (Mouse)).